A 164-amino-acid chain; its full sequence is Succinate dehydrogenase assembly factor 2, mitochondrial (164 aa).

A mitochondrion-targeting transit peptide spans 1 to 27 (MAVVTLIPTLARVLSKHSLLSPLLSVT).

Belongs to the SDHAF2 family. In terms of assembly, interacts with SDHA within the SDH catalytic dimer.

It localises to the mitochondrion matrix. Plays an essential role in the assembly of succinate dehydrogenase (SDH), an enzyme complex (also referred to as respiratory complex II) that is a component of both the tricarboxylic acid (TCA) cycle and the mitochondrial electron transport chain, and which couples the oxidation of succinate to fumarate with the reduction of ubiquinone (coenzyme Q) to ubiquinol. Required for flavinylation (covalent attachment of FAD) of the flavoprotein subunit SDHA of the SDH catalytic dimer. In Rattus norvegicus (Rat), this protein is Succinate dehydrogenase assembly factor 2, mitochondrial.